Consider the following 462-residue polypeptide: PTS system mannitol-specific cryptic EIICB component (462 aa).

Residues 1 to 24 lie on the Cytoplasmic side of the membrane; it reads MENKSARAKVQAFGGFLTAMVIPN. A PTS EIIC type-2 domain is found at 13–344; that stretch reads FGGFLTAMVI…LKMEKTVETE (332 aa). A helical membrane pass occupies residues 25 to 46; it reads IGAFIAWGFITALFIPTGWLPN. The Periplasmic segment spans residues 47–50; sequence EHFA. The helical transmembrane segment at 51–71 threads the bilayer; that stretch reads KIVGPMITYLLPVMIGSTGGH. Residues 72 to 134 lie on the Cytoplasmic side of the membrane; the sequence is LVGGKRGAVM…AGFEMVINNF (63 aa). The chain crosses the membrane as a helical span at residues 135-156; sequence SLGIAGMLLCLLGFEVIGPAVL. Over 157–165 the chain is Periplasmic; sequence IANTFVKEC. Residues 166-186 form a helical membrane-spanning segment; sequence IEALVHAGYLPLLSVINEPAK. Residues 187–273 are Cytoplasmic-facing; it reads VLFLNNAIDQ…VLMKPLTIIA (87 aa). A helical transmembrane segment spans residues 274–293; sequence MIAGGMSGTWMFNLLDGGLV. Over 294 to 313 the chain is Periplasmic; it reads AGPSPGSIFAYLALTPKGSF. A helical transmembrane segment spans residues 314–335; sequence LATIAGVTVGTLVSFAITSLIL. Residues 336–462 are Cytoplasmic-facing; sequence KMEKTVETES…FNQLTAEHKH (127 aa). The 91-residue stretch at 371 to 461 folds into the PTS EIIB type-2 domain; sequence KRIAFVCDAG…LFNQLTAEHK (91 aa). C377 acts as the Phosphocysteine intermediate; for EIIB activity in catalysis. Position 377 is a phosphocysteine; by EIIA (C377).

It localises to the cell inner membrane. The catalysed reaction is D-mannitol(out) + N(pros)-phospho-L-histidyl-[protein] = D-mannitol 1-phosphate(in) + L-histidyl-[protein]. Its function is as follows. The phosphoenolpyruvate-dependent sugar phosphotransferase system (sugar PTS), a major carbohydrate active transport system, catalyzes the phosphorylation of incoming sugar substrates concomitantly with their translocation across the cell membrane. The enzyme II CmtAB PTS system is involved in D-mannitol transport. In Escherichia coli O157:H7, this protein is PTS system mannitol-specific cryptic EIICB component (cmtA).